Here is a 99-residue protein sequence, read N- to C-terminus: Putative endopeptidase RzpR (99 aa).

The polypeptide is Putative endopeptidase RzpR (rzpR) (Escherichia coli (strain K12)).